The sequence spans 63 residues: uncharacterized protein (63 aa).

This is an uncharacterized protein from Saccharomyces cerevisiae (strain ATCC 204508 / S288c) (Baker's yeast).